A 962-amino-acid polypeptide reads, in one-letter code: UBP9-binding protein bun107 (962 aa).

WD repeat units follow at residues Asp-25–Ser-69, Ala-77–Leu-116, Glu-121–Arg-162, Val-172–Asp-211, Gly-214–Ser-253, and Lys-302–Val-339. Low complexity predominate over residues Ser-568–Pro-578. Disordered regions lie at residues Ser-568–Ser-615 and Arg-702–Leu-758. Polar residues predominate over residues Arg-707 to Lys-723. Position 717 is a phosphoserine (Ser-717). The segment covering Thr-724–Thr-738 has biased composition (low complexity).

Interacts with ubp9 and bun62.

The protein resides in the cytoplasm. Its subcellular location is the cell tip. Its function is as follows. Required for the ubp9 recruitment to septa and cell tips but also for its enzymatic activity at these specific locations. The chain is UBP9-binding protein bun107 (bun107) from Schizosaccharomyces pombe (strain 972 / ATCC 24843) (Fission yeast).